Here is a 314-residue protein sequence, read N- to C-terminus: DNA oxidative demethylase ALKBH2 (314 aa).

Over residues 1-28 (MTNPLNSTAANRSNQPSSDGISDGQITN) the composition is skewed to polar residues. The interval 1–75 (MTNPLNSTAA…KRFHYHQDQR (75 aa)) is disordered. Positions 57-75 (NGKDDSDTKKRFHYHQDQR) are enriched in basic and acidic residues. Residues W132 and 160-163 (ALVY) contribute to the substrate site. A Fe2OG dioxygenase domain is found at 194–314 (RFNSLLLNRY…RINLTFRLVL (121 aa)). Residue 201-203 (NRY) participates in 2-oxoglutarate binding. Residues H213 and D215 each contribute to the Fe cation site. D216 lines the substrate pocket. Residues 242-271 (KKDEESSQGKTGDSGPAKKRLKRSSREDQQ) are disordered. H293 lines the Fe cation pocket. 2-oxoglutarate-binding positions include R305 and 305 to 311 (RINLTFR).

The protein belongs to the alkB family. Fe(2+) serves as cofactor. Expressed ubiquitously, including in seedlings, leaves and flowers.

It localises to the nucleus. It catalyses the reaction a methylated nucleobase within DNA + 2-oxoglutarate + O2 = a nucleobase within DNA + formaldehyde + succinate + CO2. In terms of biological role, dioxygenase that repairs alkylated DNA containing 1-methyladenine and 1-ethenoadenine by oxidative demethylation. Accepts double-stranded and single-stranded substrates, with a preference for dsDNA over ssDNA. Confers resistance to methylating agents such as methylmethanesulphonate (MMS). In Arabidopsis thaliana (Mouse-ear cress), this protein is DNA oxidative demethylase ALKBH2 (ALKBH2).